The primary structure comprises 399 residues: Glutathione S-transferase LANCL1 (399 aa).

An N-acetylalanine modification is found at alanine 2. Lysine 142 carries the N6-acetyllysine modification. Zn(2+) is bound at residue cysteine 276. Lysine 317 serves as a coordination point for glutathione. The Zn(2+) site is built by cysteine 322 and histidine 323. 364 to 367 (RTPD) serves as a coordination point for glutathione.

This sequence belongs to the LanC-like protein family. Interacts with the C-terminal of STOM. Interacts with the EPS8 SH3 domain. Interaction with EPS8 is inhibited by glutathione binding. As to quaternary structure, (Microbial infection) Interacts with P.falciparum SBP1. As to expression, detected in erythrocytes, brain, kidney, testis, ovary, heart, lung, placenta and spleen (at protein level). Ubiquitous. Strongly expressed in brain, spinal cord, pituitary gland, kidney, heart, skeletal muscle, pancreas, ovary and testis.

Its subcellular location is the cytoplasm. The protein resides in the cell membrane. The enzyme catalyses RX + glutathione = an S-substituted glutathione + a halide anion + H(+). It catalyses the reaction 1-chloro-2,4-dinitrobenzene + glutathione = 2,4-dinitrophenyl-S-glutathione + chloride + H(+). Functions as a glutathione transferase. Catalyzes conjugation of the glutathione (GSH) to artificial substrates 1-chloro-2,4-dinitrobenzene (CDNB) and p-nitrophenyl acetate. Mitigates neuronal oxidative stress during normal postnatal development and in response to oxidative stresses probably through GSH antioxidant defense mechanism. May play a role in EPS8 signaling. Binds glutathione. The protein is Glutathione S-transferase LANCL1 of Homo sapiens (Human).